A 237-amino-acid polypeptide reads, in one-letter code: Tetraspanin-8 (237 aa).

Residues 1–9 lie on the Cytoplasmic side of the membrane; sequence MAGVSACIK. Residues 10–33 form a helical membrane-spanning segment; the sequence is YSMFTFNFLFWLCGILILALAIWV. The Extracellular segment spans residues 34 to 57; the sequence is RVSNDSQAIFGSEDVGSSSYVAVD. Residues 58 to 72 traverse the membrane as a helical segment; that stretch reads ILIAVGAIIMILGFL. The Cytoplasmic segment spans residues 73–83; it reads GCCGAIKESRC. Residues 84–109 form a helical membrane-spanning segment; it reads MLLLFFIGLLLILLLQVATGILGAVF. Topologically, residues 110–205 are extracellular; that stretch reads KSKSDRIVNE…SFIKDFLAKN (96 aa). N118 carries an N-linked (GlcNAc...) asparagine glycan. The helical transmembrane segment at 206–230 threads the bilayer; sequence LIIVIGISFGLAVIEILGLVFSMVL. Residues 231-237 lie on the Cytoplasmic side of the membrane; sequence YCQIGNK.

It belongs to the tetraspanin (TM4SF) family. As to quaternary structure, forms homooligomers. Interacts with MEP1B. Interacts with integrin alpha3/ITGA3. Interacts with RICTOR and MTOR. Interacts with ADAM17. Interacts with ECE1. In terms of tissue distribution, gastric, colon, rectal, and pancreatic carcinomas.

The protein resides in the cell membrane. Functionally, structural component of specialized membrane microdomains known as tetraspanin-enriched microdomains (TERMs), which act as platforms for receptor clustering and signaling. Participates thereby in diverse biological functions such as cell signal transduction, migration and protein trafficking. Promotes ADAM17-mediated TNF-alpha processing through recruitment of ADAM17 to tetraspanin-enriched micro-domains (TEMs). Forms a complex with RICTOR and integrin alpha3/ITGA3 to mediate mTORC2 activation and AKT1 phosphorylation leading to cell migration. Reduces apoptosis and autophagy induced by high glucose levels through forming a complex with mTOR and RICTOR. Contributes to the maintenance of intestinal epithelial barrier and plays a role in the regulation of intestine inflammation by switching interferon gamma receptor 1/IFNGR1 from clathrin-dependent to lipid raft-dependent endocytosis route to limit STAT1 activation magnitude and duration. Acts as a modulator of the endothelin axis by associating with endothelin converting enzyme ECE1 and regulating its activity of conversion of the endothelin-1 precursor to endothelin. The polypeptide is Tetraspanin-8 (TSPAN8) (Homo sapiens (Human)).